The sequence spans 221 residues: Large ribosomal subunit protein uL3 (221 aa).

Positions 140 to 160 (GGPKTHGSGFHRHAGSIGMRS) are disordered.

The protein belongs to the universal ribosomal protein uL3 family. In terms of assembly, part of the 50S ribosomal subunit. Forms a cluster with proteins L14 and L19.

Its function is as follows. One of the primary rRNA binding proteins, it binds directly near the 3'-end of the 23S rRNA, where it nucleates assembly of the 50S subunit. This Chlamydia caviae (strain ATCC VR-813 / DSM 19441 / 03DC25 / GPIC) (Chlamydophila caviae) protein is Large ribosomal subunit protein uL3.